The primary structure comprises 537 residues: Putative cysteine ligase BshC (537 aa).

The stretch at 422 to 450 (IEKVEGMIEQQRRLYQDLLDEVAGNQNNI) forms a coiled coil.

The protein belongs to the BshC family.

Its function is as follows. Involved in bacillithiol (BSH) biosynthesis. May catalyze the last step of the pathway, the addition of cysteine to glucosamine malate (GlcN-Mal) to generate BSH. The protein is Putative cysteine ligase BshC of Staphylococcus aureus (strain MRSA252).